A 624-amino-acid chain; its full sequence is Poly(A)-specific ribonuclease PARN (624 aa).

The a divalent metal cation site is built by aspartate 28 and glutamate 30. An R3H domain is found at 171–238; that stretch reads KKFIDQVIEK…ERHIVISKVD (68 aa). Lysine 213 carries the post-translational modification N6-acetyllysine. Residues aspartate 285 and aspartate 375 each contribute to the a divalent metal cation site. Lysine 492 bears the N6-acetyllysine mark. Phosphoserine is present on serine 523. A Phosphoserine; by MAPKAPK2 modification is found at serine 543. The interval 551–612 is disordered; the sequence is GKRTLSPDPR…ELSLAGSVSD (62 aa). A compositionally biased stretch (acidic residues) spans 567–579; sequence RESEEVSDSELEQ. Residues serine 569, serine 573, and serine 575 each carry the phosphoserine modification. Over residues 592–601 the composition is skewed to basic residues; it reads KKSKKLKRMK. 3 positions are modified to phosphoserine: serine 605, serine 609, and serine 613.

This sequence belongs to the CAF1 family. Homodimer. Found in a mRNA decay complex with RENT1, RENT2 and RENT3B. Interacts with KHSRP. Interacts with CELF1/CUGBP1. Interacts with ZC3HAV1 in an RNA-independent manner. Interacts with DHX36. Mg(2+) serves as cofactor. Post-translationally, phosphorylation by MAPKAPK2, preventing GADD45A mRNA degradation after genotoxic stress.

The protein localises to the nucleus. It is found in the cytoplasm. Its subcellular location is the nucleolus. It carries out the reaction Exonucleolytic cleavage of poly(A) to 5'-AMP.. In terms of biological role, 3'-exoribonuclease that has a preference for poly(A) tails of mRNAs, thereby efficiently degrading poly(A) tails. Exonucleolytic degradation of the poly(A) tail is often the first step in the decay of eukaryotic mRNAs and is also used to silence certain maternal mRNAs translationally during oocyte maturation and early embryonic development. Interacts with both the 3'-end poly(A) tail and the 5'-end cap structure during degradation, the interaction with the cap structure being required for an efficient degradation of poly(A) tails. Involved in nonsense-mediated mRNA decay, a critical process of selective degradation of mRNAs that contain premature stop codons. Also involved in degradation of inherently unstable mRNAs that contain AU-rich elements (AREs) in their 3'-UTR, possibly via its interaction with KHSRP. Probably mediates the removal of poly(A) tails of AREs mRNAs, which constitutes the first step of destabilization. Also able to recognize poly(A) tails of microRNAs such as MIR21 and H/ACA box snoRNAs (small nucleolar RNAs) leading to leading to microRNAs degradation or snoRNA increased stability. In Mus musculus (Mouse), this protein is Poly(A)-specific ribonuclease PARN (Parn).